The chain runs to 196 residues: Transmembrane protein 126A (196 aa).

The Mitochondrial matrix segment spans residues 1–34 (MENHKSNNTKENITIVDISRKINQLPEAERNLLE). Residues 35–55 (HGSVYVGLNAALCGLIANSLF) traverse the membrane as a helical segment. The Mitochondrial intermembrane portion of the chain corresponds to 56 to 57 (RR). A helical transmembrane segment spans residues 58–78 (ILNVTKARIAAGLPMAWIPFL). At 79–107 (TTDITYRCFVSFPLNTGDLDCETCTITRS) the chain is on the mitochondrial matrix side. The helical transmembrane segment at 108–128 (GLIGLVIGGLYPVFLAIPVNG) threads the bilayer. Topologically, residues 129–159 (GLAARYQSALLPHKGNILSYWIRTSKPVFRK) are mitochondrial intermembrane. A helical membrane pass occupies residues 160-176 (MLFPIMLQTMFSAYLGS). Topologically, residues 177-196 (EQYKLLIKALQLSEPGKEIH) are mitochondrial matrix.

It belongs to the TMEM126 family. Interacts with OXA1L; promoting cotranslational quality control in mitochondria.

Its subcellular location is the mitochondrion inner membrane. Protein required for the cotranslational protein quality control in the inner membrane of the mitochondria. Associates with newly synthesized polypeptides and may act as a chaperone that cooperates with OXA1L for the insertion of newly synthesized mitochondrial proteins into the inner membrane. Required for the assembly of the ND4 module of mitochondrial complex I. This chain is Transmembrane protein 126A (TMEM126A), found in Pongo abelii (Sumatran orangutan).